The sequence spans 166 residues: MRIDTSELCDVYLDQVDVVEPIFSSFGGVNEFFGKVTTIKCFENNGLIAEILEEQGEGRVLLVDGGGAVRRALIDAELAQLAADNGWEGIIVYGAVRQLSRLENINIGIHALAPIPVGADEDTQGESDIPVNFGGVTFFPEDYVYADLTGIILSQEPLELEELGEE.

This sequence belongs to the RraA family. Homotrimer. Binds to both RNA-binding sites in the C-terminal region of Rne and to RhlB.

The protein localises to the cytoplasm. Its function is as follows. Globally modulates RNA abundance by binding to RNase E (Rne) and regulating its endonucleolytic activity. Can modulate Rne action in a substrate-dependent manner by altering the composition of the degradosome. Modulates RNA-binding and helicase activities of the degradosome. The chain is Regulator of ribonuclease activity A from Mannheimia succiniciproducens (strain KCTC 0769BP / MBEL55E).